We begin with the raw amino-acid sequence, 620 residues long: Aspartic protease 1 (620 aa).

Topologically, residues 1 to 110 are cytoplasmic; that stretch reads MSPSSRFRNL…LGKAVGLSTS (110 aa). Residues 1 to 258 constitute a propeptide that is removed on maturation; sequence MSPSSRFRNL…SKKDDGNLSG (258 aa). The interval 27–31 is important for proper cellular trafficking; that stretch reads YASLL. The chain crosses the membrane as a helical; Signal-anchor for type II membrane protein span at residues 111 to 131; sequence VICVVALFGIVCLCLYGLVNF. Residues 132-620 lie on the Lumenal side of the membrane; that stretch reads SFTSVETSPL…KQIGFARLKN (489 aa). Residues 138-174 form a disordered region; the sequence is TSPLDDPRNSPVMGELGNPQASTPSSARADTPARHDR. Polar residues predominate over residues 156–165; the sequence is PQASTPSSAR. In terms of domain architecture, Peptidase A1 spans 275 to 616; that stretch reads YYTEIYVGSP…DYDNKQIGFA (342 aa). Residues Asp-293 and Asp-476 contribute to the active site. Cys-513 and Cys-550 are disulfide-bonded.

The protein belongs to the peptidase A1 family. In terms of processing, proteolytically cleaved into the soluble active mature form by, at least, cysteine protease CPL. Undergoes at least four processing steps; the first cleavage removes the propeptide resulting in the production of a soluble 45 kDa protein, which is further processed into a 35 kDa form followed by an additional processing into the final active 30 kDa form.

The protein resides in the membrane. It is found in the vacuole. Its function is as follows. Aspartyl protease which is dispensable for protein degradation in the vacuolar compartment (VAC) or for tachyzoite and bradyzoite viability. The chain is Aspartic protease 1 from Toxoplasma gondii.